A 141-amino-acid chain; its full sequence is Nucleoside diphosphate kinase (141 aa).

ATP-binding residues include Lys-9, Phe-57, Arg-85, Thr-91, Arg-102, and Asn-112. Catalysis depends on His-115, which acts as the Pros-phosphohistidine intermediate.

This sequence belongs to the NDK family. As to quaternary structure, homotetramer. Mg(2+) is required as a cofactor.

Its subcellular location is the cytoplasm. It catalyses the reaction a 2'-deoxyribonucleoside 5'-diphosphate + ATP = a 2'-deoxyribonucleoside 5'-triphosphate + ADP. The enzyme catalyses a ribonucleoside 5'-diphosphate + ATP = a ribonucleoside 5'-triphosphate + ADP. Functionally, major role in the synthesis of nucleoside triphosphates other than ATP. The ATP gamma phosphate is transferred to the NDP beta phosphate via a ping-pong mechanism, using a phosphorylated active-site intermediate. This is Nucleoside diphosphate kinase from Chlamydia trachomatis serovar A (strain ATCC VR-571B / DSM 19440 / HAR-13).